We begin with the raw amino-acid sequence, 308 residues long: GTPase Era (308 aa).

The Era-type G domain maps to 9–179 (RAGFVALIGE…RAWLGASLPE (171 aa)). The tract at residues 17–24 (GEPNAGKS) is G1. 17-24 (GEPNAGKS) lines the GTP pocket. Residues 43–47 (QTTRA) are G2. A G3 region spans residues 64-67 (DTPG). Residues 64 to 68 (DTPGL) and 129 to 132 (NKID) each bind GTP. Residues 129–132 (NKID) form a G4 region. The segment at 158–160 (ISA) is G5. In terms of domain architecture, KH type-2 spans 210 to 287 (LHQELPYQLT…HLFLQVKVRP (78 aa)).

Belongs to the TRAFAC class TrmE-Era-EngA-EngB-Septin-like GTPase superfamily. Era GTPase family. In terms of assembly, monomer.

The protein localises to the cytoplasm. The protein resides in the cell inner membrane. Functionally, an essential GTPase that binds both GDP and GTP, with rapid nucleotide exchange. Plays a role in 16S rRNA processing and 30S ribosomal subunit biogenesis and possibly also in cell cycle regulation and energy metabolism. This chain is GTPase Era, found in Dinoroseobacter shibae (strain DSM 16493 / NCIMB 14021 / DFL 12).